The primary structure comprises 99 residues: DNA-directed RNA polymerase subunit omega (99 aa).

The protein belongs to the RNA polymerase subunit omega family. In terms of assembly, the RNAP catalytic core consists of 2 alpha, 1 beta, 1 beta' and 1 omega subunit. When a sigma factor is associated with the core the holoenzyme is formed, which can initiate transcription.

The enzyme catalyses RNA(n) + a ribonucleoside 5'-triphosphate = RNA(n+1) + diphosphate. Promotes RNA polymerase assembly. Latches the N- and C-terminal regions of the beta' subunit thereby facilitating its interaction with the beta and alpha subunits. This is DNA-directed RNA polymerase subunit omega (rpoZ) from Deinococcus radiodurans (strain ATCC 13939 / DSM 20539 / JCM 16871 / CCUG 27074 / LMG 4051 / NBRC 15346 / NCIMB 9279 / VKM B-1422 / R1).